Here is a 307-residue protein sequence, read N- to C-terminus: Pantothenate kinase (307 aa).

An ATP-binding site is contributed by 87–94 (GSVAVGKS).

Belongs to the prokaryotic pantothenate kinase family.

Its subcellular location is the cytoplasm. The enzyme catalyses (R)-pantothenate + ATP = (R)-4'-phosphopantothenate + ADP + H(+). The protein operates within cofactor biosynthesis; coenzyme A biosynthesis; CoA from (R)-pantothenate: step 1/5. The protein is Pantothenate kinase of Vibrio vulnificus (strain YJ016).